The chain runs to 603 residues: Carbon catabolite repressor protein 4 homolog 2 (603 aa).

The segment at 115 to 136 (ENNANEDDDLNRNNSAGSGSLA) is disordered. Positions 126 to 136 (RNNSAGSGSLA) are enriched in low complexity. E302 contacts Mg(2+).

This sequence belongs to the CCR4/nocturin family. As to quaternary structure, component of the CCR4-NOT complex, at least composed of CRR4 and CAF1 proteins. Requires Mg(2+) as cofactor.

It is found in the nucleus. The protein localises to the cytoplasm. The enzyme catalyses Exonucleolytic cleavage of poly(A) to 5'-AMP.. Acts as a catalytic component of the CCR4-NOT core complex, which in the nucleus seems to be a general transcription factor, and in the cytoplasm the major mRNA deadenylase involved in mRNA turnover. The sequence is that of Carbon catabolite repressor protein 4 homolog 2 (CCR4-2) from Arabidopsis thaliana (Mouse-ear cress).